The following is an 822-amino-acid chain: MMLRWSGIWGLSPPRIFPSLLVVVALVGLLPVLRSHGLQPSPTANTIRGAEPPRERSIGDVTTAPSEPVHHPDDRNLTNLHIEHGAKTLRKAFPVLDIDYLHVRTPFEISLWILLACLMKIGFHVIPTISSIVPESCLLIVVGLLVGGLIKGVGETPPFLQSDVFFLFLLPPIILDAGYFLPLRQFTENLGTILIFAVVGTLWNAFFLGGLLYAVCLVGGEQINNIGLLDTLLFGSIISAVDPVAVVAVFEEIHINELLHILVFGESLLNDAVTVVLYHLFEEFANYDSIGISDIFLGFLSFFVVALGGVFVGVVYGVIAAFTSRFTSHIRVIEPLFVFLYSYMAYLSAELFHLSGIMALIASGVVMRPYVEANISHKSHTTIKYFLKMWSSVSETLIFIFLGVSTVAGSHQWNWTFVISTLLFCLIARVLGVLVLTWFINKFRIVKLTPKDQFIIAYGGLRGAIAFSLGYLMDKKHFPMCDLFLTAIITVIFFTVFVQGMTIRPLVDLLAVKKKQETKRSINEEIHTQFLDHLLTGIEDICGHYGHHHWKDKLNRFNKKYVKKCLIAGERSKEPQLIAFYHKMEMKQAIELVESGGMGKIPSAVSTVSMQNIHPKSMASERILPALSKDKEEEIRKILRSNLQKTRQRLRSYNRHTLVADPYEEAWNQMLLRRQKARQLEQKMSNYLTVPAHKLDSPTMSRARIGSDPLAYEPKADLPVITIDPASPQSPESVDLVNEELKAKVLGVNRDPTRLTRGEEDEDEDEDGVIMMRRKEPSSPGTDVFTPAPMYSPSSQRIQRCLSDPGPHPEPGEGEPFIPKGE.

Residues 1 to 102 (MMLRWSGIWG…FPVLDIDYLH (102 aa)) lie on the Extracellular side of the membrane. Residues 41 to 73 (SPTANTIRGAEPPRERSIGDVTTAPSEPVHHPD) form a disordered region. A helical membrane pass occupies residues 103 to 125 (VRTPFEISLWILLACLMKIGFHV). Over 126–134 (IPTISSIVP) the chain is Cytoplasmic. The helical transmembrane segment at 135 to 152 (ESCLLIVVGLLVGGLIKG) threads the bilayer. The Extracellular segment spans residues 153–162 (VGETPPFLQS). Residues 163–180 (DVFFLFLLPPIILDAGYF) traverse the membrane as a helical segment. Topologically, residues 181-190 (LPLRQFTENL) are cytoplasmic. The chain crosses the membrane as a helical span at residues 191–219 (GTILIFAVVGTLWNAFFLGGLLYAVCLVG). Residues 220–226 (GEQINNI) are Extracellular-facing. Residues 227–253 (GLLDTLLFGSIISAVDPVAVVAVFEEI) form a helical membrane-spanning segment. Over 254–256 (HIN) the chain is Cytoplasmic. The helical transmembrane segment at 257-287 (ELLHILVFGESLLNDAVTVVLYHLFEEFANY) threads the bilayer. Over 288–291 (DSIG) the chain is Extracellular. Residues 292-326 (ISDIFLGFLSFFVVALGGVFVGVVYGVIAAFTSRF) traverse the membrane as a helical segment. Residues 327-332 (TSHIRV) are Cytoplasmic-facing. The chain crosses the membrane as a helical span at residues 333–345 (IEPLFVFLYSYMA). Residues 346–354 (YLSAELFHL) lie on the Extracellular side of the membrane. A helical transmembrane segment spans residues 355 to 375 (SGIMALIASGVVMRPYVEANI). Over 376 to 377 (SH) the chain is Cytoplasmic. Residues 378–408 (KSHTTIKYFLKMWSSVSETLIFIFLGVSTVA) traverse the membrane as a helical segment. Over 409 to 414 (GSHQWN) the chain is Extracellular. A helical transmembrane segment spans residues 415–442 (WTFVISTLLFCLIARVLGVLVLTWFINK). At 443–448 (FRIVKL) the chain is on the cytoplasmic side. The helical transmembrane segment at 449–473 (TPKDQFIIAYGGLRGAIAFSLGYLM) threads the bilayer. The Extracellular portion of the chain corresponds to 474–479 (DKKHFP). A helical transmembrane segment spans residues 480–509 (MCDLFLTAIITVIFFTVFVQGMTIRPLVDL). Residues 507 to 549 (VDLLAVKKKQETKRSINEEIHTQFLDHLLTGIEDICGHYGHHH) form an interaction with TESC region. Over 510–822 (LAVKKKQETK…EGEPFIPKGE (313 aa)) the chain is Cytoplasmic. A PI(4,5)P2-binding region region spans residues 513–520 (KKKQETKR). Positions 519 to 549 (KRSINEEIHTQFLDHLLTGIEDICGHYGHHH) are interaction with CHP2. A confers pH-dependent PI(4,5)P2 binding region spans residues 544–549 (HYGHHH). Positions 556 to 564 (RFNKKYVKK) are PI(4,5)P2-binding region. Serine 603 and serine 606 each carry phosphoserine. At threonine 607 the chain carries Phosphothreonine. Phosphoserine is present on residues serine 609 and serine 652. Positions 637–822 (KILRSNLQKT…EGEPFIPKGE (186 aa)) are interaction with TESC. The interaction with CALM1 stretch occupies residues 637-822 (KILRSNLQKT…EGEPFIPKGE (186 aa)). An interaction with PPP3CA region spans residues 688-691 (LTVP). A phosphoserine mark is found at serine 697, serine 701, and serine 707. The interaction with PPP3CA stretch occupies residues 719 to 724 (PVITID). Phosphoserine is present on residues serine 727, serine 730, and serine 733. The segment at 752-822 (PTRLTRGEED…EGEPFIPKGE (71 aa)) is disordered. Phosphothreonine is present on threonine 756. Positions 759-768 (EEDEDEDEDG) are enriched in acidic residues. Threonine 786 carries the post-translational modification Phosphothreonine. 3 positions are modified to phosphoserine: serine 792, serine 794, and serine 803.

It belongs to the monovalent cation:proton antiporter 1 (CPA1) transporter (TC 2.A.36) family. Homodimer; dimerization is crucial for its function. Oligomer. Interacts with CALM in a calcium-dependent manner. Interacts with TESC. Interacts (via the juxtamembrane region of the cytoplasmic C-terminal domain) with CHP1; the interaction occurs at the plasma membrane in a calcium-dependent manner. Interacts with CHP2; the interaction occurs in a calcium-dependent manner. Interacts with EZR; regulates the cytoskeletal interactions of SLC9A1 and promotes stress fiber formation. In terms of processing, ubiquitinated, leading to its degradation by the proteasome. Ubiquitination is reduced by CHP1. Post-translationally, O-glycosylated. Palmitoylated; may play a major role in SLC9A1 regulation. In terms of processing, phosphorylation at Thr-786 increases SLC9A1 activity. Specifically dephosphorylated at Thr-786 by PPP3CA that negatively regulates SLC9A1 activity. Phosphorylation at Ser-652 by AKT1 reduces SLC9A1 binding to CALM1.

It is found in the cell membrane. The protein localises to the basolateral cell membrane. It catalyses the reaction Na(+)(in) + H(+)(out) = Na(+)(out) + H(+)(in). It carries out the reaction Li(+)(out) + H(+)(in) = Li(+)(in) + H(+)(out). The enzyme catalyses Li(+)(in) + Na(+)(out) = Li(+)(out) + Na(+)(in). Its activity is regulated as follows. Activated at acidic pHs. Inhibited by amiloride and 5-amino-substituted derivatives. Inhibited by cariporide and eniporide. Phosphatidylinositol 4,5-bisphosphate (PI(4,5)P2) and phosphatidylinositol 3,4,5-trisphosphate (PI(3,4,5)P3) bind and differentially regulate SLC9A1 activity. Functionally, electroneutral Na(+) /H(+) antiporter that extrudes Na(+) in exchange for external protons driven by the inward sodium ion chemical gradient, protecting cells from acidification that occurs from metabolism. Exchanges intracellular H(+) ions for extracellular Na(+) in 1:1 stoichiometry. Plays a key role in maintening intracellular pH neutral and cell volume, and thus is important for cell growth, proliferation, migration and survival. In addition, can transport lithium Li(+) and also functions as a Na(+)/Li(+) antiporter. SLC9A1 also functions in membrane anchoring and organization of scaffolding complexes that coordinate signaling inputs. In Cricetulus griseus (Chinese hamster), this protein is Sodium/hydrogen exchanger 1 (SLC9A1).